An 840-amino-acid polypeptide reads, in one-letter code: Radial spoke head 10 homolog B (840 aa).

Composition is skewed to basic and acidic residues over residues 1–16 (MVKE…DKSA) and 51–63 (QPKD…EVKS). The interval 1–74 (MVKEKKKADK…SLPNEDTTQY (74 aa)) is disordered. MORN repeat units lie at residues 86 to 108 (SYEG…QGGC), 109 to 131 (TYQG…ADGL), 132 to 154 (KYEG…PDGS), 155 to 177 (TYEG…STQP), 179 to 201 (SYIG…NQEG), 204 to 226 (WYEG…KSGN), 227 to 249 (IYEG…LTTN), 251 to 273 (EYTG…FLKR), 284 to 306 (EYVG…ASGA), and 307 to 329 (MYEG…KNGR). A coiled-coil region spans residues 758–801 (KEKVKENRLHNEAMALQRKMENEELEARLNSLREEEAKRQDYEV). Positions 810 to 840 (VDAPSSSFTPSPPKEDTVVSSKSITSKKKKK) are disordered.

Interacts with RSPH6A. Does not appear to be part of the axonemal radial spoke complexes 1 or 2.

It is found in the cytoplasm. Its subcellular location is the cytoskeleton. It localises to the cilium axoneme. The protein resides in the cell projection. The protein localises to the cilium. It is found in the flagellum. In terms of biological role, may function as part of the axonemal radial spoke complex 3 (RS3). Radial spoke complexes are important for ciliary motility. This is Radial spoke head 10 homolog B (RSPH10B) from Bos taurus (Bovine).